The primary structure comprises 194 residues: Small ribosomal subunit protein eS7 (194 aa).

This sequence belongs to the eukaryotic ribosomal protein eS7 family.

In Drosophila melanogaster (Fruit fly), this protein is Small ribosomal subunit protein eS7 (RpS7).